We begin with the raw amino-acid sequence, 874 residues long: Alanine--tRNA ligase (874 aa).

Zn(2+)-binding residues include His562, His566, Cys664, and His668.

The protein belongs to the class-II aminoacyl-tRNA synthetase family. Zn(2+) serves as cofactor.

The protein localises to the cytoplasm. The catalysed reaction is tRNA(Ala) + L-alanine + ATP = L-alanyl-tRNA(Ala) + AMP + diphosphate. Catalyzes the attachment of alanine to tRNA(Ala) in a two-step reaction: alanine is first activated by ATP to form Ala-AMP and then transferred to the acceptor end of tRNA(Ala). Also edits incorrectly charged Ser-tRNA(Ala) and Gly-tRNA(Ala) via its editing domain. The protein is Alanine--tRNA ligase of Shewanella woodyi (strain ATCC 51908 / MS32).